The primary structure comprises 73 residues: Translation initiation factor IF-1 (73 aa).

Residues 1-73 form the S1-like domain; sequence MAKKEDTIVL…TKARVVYRHR (73 aa).

It belongs to the IF-1 family. As to quaternary structure, component of the 30S ribosomal translation pre-initiation complex which assembles on the 30S ribosome in the order IF-2 and IF-3, IF-1 and N-formylmethionyl-tRNA(fMet); mRNA recruitment can occur at any time during PIC assembly.

The protein resides in the cytoplasm. One of the essential components for the initiation of protein synthesis. Stabilizes the binding of IF-2 and IF-3 on the 30S subunit to which N-formylmethionyl-tRNA(fMet) subsequently binds. Helps modulate mRNA selection, yielding the 30S pre-initiation complex (PIC). Upon addition of the 50S ribosomal subunit IF-1, IF-2 and IF-3 are released leaving the mature 70S translation initiation complex. In Chlamydia muridarum (strain MoPn / Nigg), this protein is Translation initiation factor IF-1.